We begin with the raw amino-acid sequence, 184 residues long: Tumor necrosis factor alpha-induced protein 8-like protein 2 (184 aa).

The residue at position 3 (Ser3) is a Phosphoserine.

This sequence belongs to the TNFAIP8 family. TNFAIP8L2 subfamily. As to quaternary structure, may interact with CASP8; however, such result is unclear since could not reproduce the interaction with CASP8. Interacts with RAC1. Post-translationally, phosphorylated by TAK1/MAP3K7; this phosphorylation triggers association with BTRC and subsequent ubiquitination and degradation. In terms of processing, ubiquitinated in a BTRC-depdent manner; leading to degradation mediated through the proteasome pathway.

It localises to the cytoplasm. The protein resides in the nucleus. The protein localises to the lysosome. Its function is as follows. Acts as a negative regulator of innate and adaptive immunity by maintaining immune homeostasis. Plays a regulatory role in the Toll-like signaling pathway by determining the strength of LPS-induced signaling and gene expression. Inhibits TCR-mediated T-cell activation and negatively regulate T-cell function to prevent hyperresponsiveness. Also inhibits autolysosome formation via negatively modulating MTOR activation by interacting with RAC1 and promoting the disassociation of the RAC1-MTOR complex. Plays an essential role in NK-cell biology by acting as a checkpoint and displaying an expression pattern correlating with NK-cell maturation process and by negatively regulating NK-cell maturation and antitumor immunity. Mechanistically, suppresses IL-15-triggered mTOR activity in NK-cells. This is Tumor necrosis factor alpha-induced protein 8-like protein 2 (TNFAIP8L2) from Oryctolagus cuniculus (Rabbit).